The chain runs to 5054 residues: Malformin synthetase mlfA (5054 aa).

An adenylation 1 region spans residues 194–585 (ERRAANRPHS…CGRADTQVKL (392 aa)). The region spanning 723 to 799 (LGLSQLEQEI…EASSLAEVQE (77 aa)) is the Carrier 1 domain. Serine 760 is modified (O-(pantetheine 4'-phosphoryl)serine). Residues 837–1268 (EDVFPCTTMQ…ALNTLTLLQA (432 aa)) form a condensation 1 region. The interval 1296-1685 (DRWVTRQPES…GRKDTQVKLR (390 aa)) is adenylation 2. The Carrier 2 domain occupies 1823–1900 (TASSKLELTL…QLAAILGEAT (78 aa)). An O-(pantetheine 4'-phosphoryl)serine modification is found at serine 1860. Disordered stretches follow at residues 1899–1929 (ATGQ…NDGV) and 1964–1994 (GSSS…VSPV). Low complexity-rich tracts occupy residues 1904 to 1927 (ESSA…STND) and 1965 to 1981 (SSSC…SSSS). The interval 2033 to 2448 (EDIYPATALQ…GVSYRDKQTL (416 aa)) is condensation 2. The tract at residues 2471–2863 (VRTPHAPAVF…IGRRDGQLKL (393 aa)) is adenylation 3. In terms of domain architecture, Carrier 3 spans 2999 to 3075 (RPATAQEREM…QLMRHLSANG (77 aa)). An O-(pantetheine 4'-phosphoryl)serine modification is found at serine 3036. 2 condensation regions span residues 3092–3557 (WVPL…TYDQ) and 3578–3997 (DIYP…EQLV). The segment at 4022–4412 (HSSREAACAW…VGRKDNQIKF (391 aa)) is adenylation 4. The 77-residue stretch at 4546–4622 (MPFTAAECKM…DLAYRTANLV (77 aa)) folds into the Carrier 4 domain. Position 4583 is an O-(pantetheine 4'-phosphoryl)serine (serine 4583). Residues 4659 to 4972 (EVLPTTSFQR…LQTIVQHQNN (314 aa)) are condensation 5.

Belongs to the NRP synthetase family.

The protein operates within secondary metabolite biosynthesis. Functionally, nonribosomal peptide synthetase; part of the gene cluster that mediates the biosynthesis of malformins, cyclic pentapeptides with a disulfide bond between 2 consecutive cysteins, that show potential anti-tumor as well as antimalarial and antitrypanosomal properties. The nonribosomal peptide synthetase mlfA is responsible of the formation of the cyclic pentapeptide. The malformin biosynthesis clusters in malformin-producing fungi also contain enzymes involved in the formation of the disulfide bond between the two consecutive cysteins within malformins, in addition to additional tailoring enzymes such as methyltransferases or oxidoreductases. They are also composed of up to 4 major facilitator superfamily transporters, and transcription factors probably involved in the regulation of the expression of those clusters. This is Malformin synthetase mlfA from Aspergillus niger (strain ATCC MYA-4892 / CBS 513.88 / FGSC A1513).